The chain runs to 103 residues: CLAVATA3/ESR (CLE)-related protein 22 (103 aa).

A signal peptide spans 1–34 (MGNYYSRRKSRKHITTVALIILLLLLFLFLYAKA). The tract at residues 37–103 (SSPNIHHHST…FTGPNPLHNR (67 aa)) is disordered. Over residues 41–50 (IHHHSTHGSL) the composition is skewed to basic residues. The segment covering 66–76 (NAASSRGSKYT) has biased composition (polar residues). At Pro97 the chain carries Hydroxyproline. O-linked (Ara...) hydroxyproline glycosylation is present at Pro97.

The protein belongs to the CLV3/ESR signal peptide family. In terms of processing, the O-glycosylation (arabinosylation) of the hydroxyproline Pro-97 enhances binding affinity of the CLE22p peptide for its receptor. Mostly expressed in stems and apex, and, to a lower extent, in seedlings, leaves, flowers and siliques.

It localises to the secreted. It is found in the extracellular space. Functionally, extracellular signal peptide that regulates cell fate. Represses root apical meristem maintenance. This Arabidopsis thaliana (Mouse-ear cress) protein is CLAVATA3/ESR (CLE)-related protein 22.